The chain runs to 876 residues: Alanine--tRNA ligase (876 aa).

Lys-74 is subject to N6-acetyllysine. Residues His-564, His-568, Cys-666, and His-670 each contribute to the Zn(2+) site.

This sequence belongs to the class-II aminoacyl-tRNA synthetase family. In terms of assembly, homotetramer. Zn(2+) is required as a cofactor.

It is found in the cytoplasm. The catalysed reaction is tRNA(Ala) + L-alanine + ATP = L-alanyl-tRNA(Ala) + AMP + diphosphate. Catalyzes the attachment of alanine to tRNA(Ala) in a two-step reaction: alanine is first activated by ATP to form Ala-AMP and then transferred to the acceptor end of tRNA(Ala). Also edits incorrectly charged Ser-tRNA(Ala) and Gly-tRNA(Ala) via its editing domain. This Escherichia coli (strain ATCC 8739 / DSM 1576 / NBRC 3972 / NCIMB 8545 / WDCM 00012 / Crooks) protein is Alanine--tRNA ligase.